A 120-amino-acid chain; its full sequence is Crustacean hyperglycemic hormones 4 (120 aa).

Residues 1–26 form the signal peptide; sequence MVALNTLSAVSAALLVLAASPSPASA. Intrachain disulfides connect cysteine 53–cysteine 89, cysteine 69–cysteine 85, and cysteine 72–cysteine 98. Valine 118 carries the valine amide modification.

It belongs to the arthropod CHH/MIH/GIH/VIH hormone family.

The protein localises to the secreted. Functionally, hormone found in the sinus gland of isopods and decapods which controls the blood sugar level. Has a secretagogue action over the amylase released from the midgut gland. May act as a stress hormone and may be involved in the control of molting and reproduction. This chain is Crustacean hyperglycemic hormones 4 (CHH4), found in Penaeus monodon (Giant tiger prawn).